The following is a 131-amino-acid chain: Small ribosomal subunit protein bS6 (131 aa).

Positions 98–131 (EASPMVKAKDERRERREDFANETADDSEAGDSEE) are disordered. The span at 104-116 (KAKDERRERREDF) shows a compositional bias: basic and acidic residues. Over residues 120–131 (TADDSEAGDSEE) the composition is skewed to acidic residues.

This sequence belongs to the bacterial ribosomal protein bS6 family.

Binds together with bS18 to 16S ribosomal RNA. This is Small ribosomal subunit protein bS6 from Klebsiella pneumoniae subsp. pneumoniae (strain ATCC 700721 / MGH 78578).